Consider the following 923-residue polypeptide: Smoothelin (923 aa).

Ala-2 is modified (N-acetylalanine). A coiled-coil region spans residues 24 to 89 (LAERRRIRSA…ARLAGRLESM (66 aa)). Residues 134–456 (SRLPSSGPRE…GTGEPGGSMK (323 aa)) are disordered. Composition is skewed to low complexity over residues 164 to 179 (QEQQTEVLEPTPTPED) and 192 to 205 (RAPPGGRPSSPASP). Positions 237-252 (LPHPSEAPSPEPPMSP) are enriched in pro residues. Polar residues-rich tracts occupy residues 272 to 285 (PSDTLDSIRGFSNT) and 293 to 314 (TKSCQRSLSVLSPRQPTPNREP). Residues Ser-299, Ser-301, Ser-304, and Ser-340 each carry the phosphoserine modification. Residues Thr-359 and Thr-372 each carry the phosphothreonine modification. Over residues 366–389 (PSLISTTPASSSSSNSSSPSPSDT) the composition is skewed to low complexity. Phosphoserine is present on residues Ser-501, Ser-521, and Ser-574. 2 disordered regions span residues 542–578 (KMEPDPAEPPSTTVEAANGAEQARVDKGPEGRSPLSA) and 615–772 (QRKR…ARKA). A coiled-coil region spans residues 601-628 (EERKLIRAALRELRQRKRDQRDKERERR). Over residues 615-638 (QRKRDQRDKERERRLREARARPGE) the composition is skewed to basic and acidic residues. Phosphoserine is present on Ser-641. Positions 674 to 687 (NDGTQTARTTTVES) are enriched in polar residues. Residues 697 to 721 (SSSSSTTTTTVQTKSFSSSSSSSSS) are compositionally biased toward low complexity. Ser-735 carries the phosphoserine modification. Residues 744–756 (LERRQAEKKKELM) show a composition bias toward basic and acidic residues. Position 798 is a phosphoserine (Ser-798). A Calponin-homology (CH) domain is found at 805 to 912 (NSIKQMLLDW…YVQSLYNHLR (108 aa)).

The protein belongs to the smoothelin family.

The protein localises to the cytoplasm. Its subcellular location is the cytoskeleton. Its function is as follows. Structural protein of the cytoskeleton. The protein is Smoothelin (Smtn) of Mus musculus (Mouse).